The primary structure comprises 289 residues: Orotidine 5'-phosphate decarboxylase (289 aa).

Lys-97 (proton donor) is an active-site residue.

This sequence belongs to the OMP decarboxylase family. Type 2 subfamily.

It catalyses the reaction orotidine 5'-phosphate + H(+) = UMP + CO2. It functions in the pathway pyrimidine metabolism; UMP biosynthesis via de novo pathway; UMP from orotate: step 2/2. The chain is Orotidine 5'-phosphate decarboxylase from Petrotoga mobilis (strain DSM 10674 / SJ95).